A 130-amino-acid polypeptide reads, in one-letter code: D-ribose pyranase (130 aa).

Histidine 20 functions as the Proton donor in the catalytic mechanism. Substrate-binding positions include aspartate 28, histidine 97, and tyrosine 119–asparagine 121.

The protein belongs to the RbsD / FucU family. RbsD subfamily. Homodecamer.

The protein localises to the cytoplasm. It carries out the reaction beta-D-ribopyranose = beta-D-ribofuranose. It participates in carbohydrate metabolism; D-ribose degradation; D-ribose 5-phosphate from beta-D-ribopyranose: step 1/2. Its function is as follows. Catalyzes the interconversion of beta-pyran and beta-furan forms of D-ribose. The protein is D-ribose pyranase of Heliobacterium modesticaldum (strain ATCC 51547 / Ice1).